The chain runs to 306 residues: Small ribosomal subunit protein uS2 (306 aa).

Ser-2 is modified (N-acetylserine). Laminin-binding regions lie at residues 161–180 and 205–229; these read IPCN…MLAR and RDPE…EYQG. [DE]-W-[ST] repeat units follow at residues 230–232, 245–247, 276–278, 286–288, and 304–306; these read EWT, DWS, and EWS. The laminin-binding stretch occupies residues 242-306; the sequence is EVADWSEGVQ…EWTGTTTEWS (65 aa). The tract at residues 261 to 306 is disordered; that stretch reads PAERPEIPAAKPAAEDWSSQPASTDDWSAAPTAQASEWTGTTTEWS. Polar residues predominate over residues 277-306; the sequence is WSSQPASTDDWSAAPTAQASEWTGTTTEWS.

The protein belongs to the universal ribosomal protein uS2 family. As to quaternary structure, monomer (37LRP) and homodimer (67LR). Component of the small ribosomal subunit. Mature ribosomes consist of a small (40S) and a large (60S) subunit. The 40S subunit contains about 33 different proteins and 1 molecule of RNA (18S). The 60S subunit contains about 49 different proteins and 3 molecules of RNA (28S, 5.8S and 5S). Interacts with rps21. Interacts with several laminins including at least lamb1. Interacts with mdk. In terms of processing, acylated. Acylation may be a prerequisite for conversion of the monomeric 37 kDa laminin receptor precursor (37LRP) to the mature dimeric 67 kDa laminin receptor (67LR), and may provide a mechanism for membrane association. Cleaved by stromelysin-3 (ST3) at the cell surface. Cleavage by stromelysin-3 may be a mechanism to alter cell-extracellular matrix interactions.

The protein resides in the cell membrane. Its subcellular location is the cytoplasm. The protein localises to the nucleus. In terms of biological role, required for the assembly and/or stability of the 40S ribosomal subunit. Required for the processing of the 20S rRNA-precursor to mature 18S rRNA in a late step of the maturation of 40S ribosomal subunits. Also functions as a cell surface receptor for laminin. Plays a role in cell adhesion to the basement membrane and in the consequent activation of signaling transduction pathways. May play a role in cell fate determination and tissue morphogenesis. The protein is Small ribosomal subunit protein uS2 (rpsa) of Xenopus tropicalis (Western clawed frog).